The following is a 121-amino-acid chain: Small ribosomal subunit protein uS13 (121 aa).

A disordered region spans residues 91 to 121 (HRMSLPVRGQRTRTNARTRRGSRKTVAGRKK). Over residues 100 to 121 (QRTRTNARTRRGSRKTVAGRKK) the composition is skewed to basic residues.

It belongs to the universal ribosomal protein uS13 family. In terms of assembly, part of the 30S ribosomal subunit. Forms a loose heterodimer with protein S19. Forms two bridges to the 50S subunit in the 70S ribosome.

In terms of biological role, located at the top of the head of the 30S subunit, it contacts several helices of the 16S rRNA. In the 70S ribosome it contacts the 23S rRNA (bridge B1a) and protein L5 of the 50S subunit (bridge B1b), connecting the 2 subunits; these bridges are implicated in subunit movement. Contacts the tRNAs in the A and P-sites. This chain is Small ribosomal subunit protein uS13, found in Prochlorococcus marinus (strain MIT 9301).